Reading from the N-terminus, the 328-residue chain is UPF0324 membrane protein AF_1621 (328 aa).

11 consecutive transmembrane segments (helical) span residues 21-39 (LQML…IINL), 43-60 (ALEP…AGNL), 73-95 (YVPF…PYLG), 101-123 (IVAA…SSRL), 130-152 (SILL…SPLI), 162-184 (AIMI…AHYA), 191-213 (FAVL…QLFG), 223-240 (GIRI…SIIY), 245-267 (FYVP…YLPG), 271-293 (QALR…YTVN), and 305-327 (LFAS…GSGA).

The protein belongs to the UPF0324 family.

The protein localises to the cell membrane. The protein is UPF0324 membrane protein AF_1621 of Archaeoglobus fulgidus (strain ATCC 49558 / DSM 4304 / JCM 9628 / NBRC 100126 / VC-16).